The chain runs to 253 residues: Ubiquinone/menaquinone biosynthesis C-methyltransferase UbiE (253 aa).

Residues T76, D97, N125–A126, and S142 each bind S-adenosyl-L-methionine.

The protein belongs to the class I-like SAM-binding methyltransferase superfamily. MenG/UbiE family.

The enzyme catalyses a 2-demethylmenaquinol + S-adenosyl-L-methionine = a menaquinol + S-adenosyl-L-homocysteine + H(+). The catalysed reaction is a 2-methoxy-6-(all-trans-polyprenyl)benzene-1,4-diol + S-adenosyl-L-methionine = a 5-methoxy-2-methyl-3-(all-trans-polyprenyl)benzene-1,4-diol + S-adenosyl-L-homocysteine + H(+). The protein operates within quinol/quinone metabolism; menaquinone biosynthesis; menaquinol from 1,4-dihydroxy-2-naphthoate: step 2/2. It functions in the pathway cofactor biosynthesis; ubiquinone biosynthesis. Functionally, methyltransferase required for the conversion of demethylmenaquinol (DMKH2) to menaquinol (MKH2) and the conversion of 2-polyprenyl-6-methoxy-1,4-benzoquinol (DDMQH2) to 2-polyprenyl-3-methyl-6-methoxy-1,4-benzoquinol (DMQH2). The protein is Ubiquinone/menaquinone biosynthesis C-methyltransferase UbiE of Xylella fastidiosa (strain M23).